We begin with the raw amino-acid sequence, 398 residues long: MNEQPENLRNFTINFGPQHPAAHGVLRLVLELDGEIVARVDPHIGLLHRGTEKLIEQKTYLQAIPYFDRLDYVAPMNQEHAFCLAAEKLLGIEVPRRGQLIRVLYCEIGRILSHLLNVTTQAMDVGALTPPLWGFEEREKLMVFYERASGSRMHAAFFRVGGVHQDLPQKLVDDIEAWCDPFLKVVDDLDRLLTANRIFKQRNVDIGVVPLKEAWEWGFSGVMVRGSGAAWDLRKSQPYECYAEMDFDIPIGKNGDCYDRYLIRMEEMRQSVRIMRQCIQKLNAPEGKGPVVVEDNKVAPPRRGEMKRSMEALIHHFKLYTEGVHVPAGEVYAAVEAPKGEFGVYLVADGTNKPYKCKIRAPGFAHLQAMDHICRGHLLADVSAILGSLDIVFGEVDR.

This sequence belongs to the complex I 49 kDa subunit family. As to quaternary structure, NDH-1 is composed of 14 different subunits. Subunits NuoB, C, D, E, F, and G constitute the peripheral sector of the complex.

It localises to the cell inner membrane. The enzyme catalyses a quinone + NADH + 5 H(+)(in) = a quinol + NAD(+) + 4 H(+)(out). NDH-1 shuttles electrons from NADH, via FMN and iron-sulfur (Fe-S) centers, to quinones in the respiratory chain. The immediate electron acceptor for the enzyme in this species is believed to be ubiquinone. Couples the redox reaction to proton translocation (for every two electrons transferred, four hydrogen ions are translocated across the cytoplasmic membrane), and thus conserves the redox energy in a proton gradient. The chain is NADH-quinone oxidoreductase subunit D from Bradyrhizobium diazoefficiens (strain JCM 10833 / BCRC 13528 / IAM 13628 / NBRC 14792 / USDA 110).